The chain runs to 146 residues: uncharacterized protein (146 aa).

An N-acetyltransferase domain is found at 7 to 146 (LQINYKTDEL…EGHDILIWNP (140 aa)).

This is an uncharacterized protein from Staphylococcus epidermidis (strain ATCC 12228 / FDA PCI 1200).